Reading from the N-terminus, the 157-residue chain is Protein-export protein SecB (157 aa).

The protein belongs to the SecB family. Homotetramer, a dimer of dimers. One homotetramer interacts with 1 SecA dimer.

The protein resides in the cytoplasm. Its function is as follows. One of the proteins required for the normal export of preproteins out of the cell cytoplasm. It is a molecular chaperone that binds to a subset of precursor proteins, maintaining them in a translocation-competent state. It also specifically binds to its receptor SecA. The chain is Protein-export protein SecB from Dichelobacter nodosus (strain VCS1703A).